The chain runs to 375 residues: Hemolysin BL-binding component (375 aa).

The N-terminal stretch at 1–31 is a signal peptide; sequence MIKKIPYKLLAVSTLLTITTANVVSPVATFA. A helical transmembrane segment spans residues 232–252; the sequence is FNVMKGAILGLPIIGGIIVGV.

In terms of assembly, composed of a binding component, B, and two lytic components, L1 and L2. All three subunits act synergically to cause hemolysis.

Its subcellular location is the secreted. It is found in the host cell membrane. In terms of biological role, cytotoxic protein, part of the enterotoxin complex. Responsible for binding to erythrocytes. This enterotoxin is thought to be the cause of the diarrheal form of gastroenteritis caused by food-borne strains of B.cereus. The chain is Hemolysin BL-binding component (hblA) from Bacillus cereus.